The following is a 305-amino-acid chain: Tyrosine recombinase XerC (305 aa).

Positions 4–95 (TSIQALINKW…AVKNFYRFLE (92 aa)) constitute a Core-binding (CB) domain. In terms of domain architecture, Tyr recombinase spans 116–298 (LLPKALSEDD…SIKHLEAVYT (183 aa)). Active-site residues include R159, K182, H250, R253, and H276. Catalysis depends on Y285, which acts as the O-(3'-phospho-DNA)-tyrosine intermediate.

Belongs to the 'phage' integrase family. XerC subfamily. Forms a cyclic heterotetrameric complex composed of two molecules of XerC and two molecules of XerD.

The protein resides in the cytoplasm. Site-specific tyrosine recombinase, which acts by catalyzing the cutting and rejoining of the recombining DNA molecules. The XerC-XerD complex is essential to convert dimers of the bacterial chromosome into monomers to permit their segregation at cell division. It also contributes to the segregational stability of plasmids. The protein is Tyrosine recombinase XerC of Rickettsia peacockii (strain Rustic).